The following is a 187-amino-acid chain: Small ribosomal subunit protein uS5 (187 aa).

Residues 21–84 (MVDKLVHINR…ESAKRDMIFV (64 aa)) form the S5 DRBM domain.

Belongs to the universal ribosomal protein uS5 family. As to quaternary structure, part of the 30S ribosomal subunit. Contacts proteins S4 and S8.

Its function is as follows. With S4 and S12 plays an important role in translational accuracy. Located at the back of the 30S subunit body where it stabilizes the conformation of the head with respect to the body. The protein is Small ribosomal subunit protein uS5 of Mesorhizobium japonicum (strain LMG 29417 / CECT 9101 / MAFF 303099) (Mesorhizobium loti (strain MAFF 303099)).